Here is a 105-residue protein sequence, read N- to C-terminus: Large ribosomal subunit protein uL24 (105 aa).

It belongs to the universal ribosomal protein uL24 family. Part of the 50S ribosomal subunit.

Functionally, one of two assembly initiator proteins, it binds directly to the 5'-end of the 23S rRNA, where it nucleates assembly of the 50S subunit. One of the proteins that surrounds the polypeptide exit tunnel on the outside of the subunit. In Aeromonas salmonicida (strain A449), this protein is Large ribosomal subunit protein uL24.